A 603-amino-acid polypeptide reads, in one-letter code: Podocalyxin-like protein 2 (603 aa).

An N-terminal signal peptide occupies residues 1-28; it reads MARPLRAARLPPPLLLLLAAGASLGAYA. Residues 29–499 are Extracellular-facing; the sequence is VGVDEPGPEG…ATQVRSDYGT (471 aa). The tract at residues 53–92 is disordered; the sequence is FEPLDSEEPSEAMGLDAGLAPGSGFPSEDSEESRLLQPPQ. The O-linked (Xyl...) (chondroitin sulfate) serine glycan is linked to Ser75. Tyr93 is modified (sulfotyrosine). The N-linked (GlcNAc...) asparagine glycan is linked to Asn101. Sulfotyrosine is present on Tyr113. The tract at residues 124–368 is disordered; it reads SMEDPGQAPD…LEGQAAEAHS (245 aa). Acidic residues predominate over residues 156–187; the sequence is QEEEEEEEEEEEEREEEEREKEAEEEEEEEEL. Low complexity predominate over residues 196–216; it reads ATAQAHAPSPSTSSSTSSQSP. Composition is skewed to polar residues over residues 240–266, 302–314, and 339–349; these read VKPTLSVPSVTPSTVAPGVQNYSQESG, ALPSSSLPQTVPP, and DTESTPSSATW. Asn260 carries N-linked (GlcNAc...) asparagine glycosylation. Asn394 carries an N-linked (GlcNAc...) asparagine glycan. A helical membrane pass occupies residues 500–520; it reads LFVVLVIIGVICFIIIVLGLL. Residues 521–603 are Cytoplasmic-facing; the sequence is YNCWQRRMPK…SDVFEEDTHL (83 aa). Positions 558–570 are enriched in polar residues; sequence DSQSEMQEKQPSL. The segment at 558 to 603 is disordered; that stretch reads DSQSEMQEKQPSLNGGAINGPSSWSALMGSKRDPEDSDVFEEDTHL. A phosphoserine mark is found at Ser569 and Ser594. Acidic residues predominate over residues 592–603; it reads EDSDVFEEDTHL.

It belongs to the podocalyxin family. Homodimer; disulfide-linked. Interacts with SELL, SELE and SELP. In terms of processing, glycosylated; contains chondroitin sulfate. Displays sialylated O-linked oligosaccharides. Sulfation is necessary for interaction with SELL. Sialylated O-linked oligosaccharides are necessary for interaction with SELL, SELE and SELP.

The protein localises to the membrane. Acts as a ligand for vascular selectins. Mediates rapid rolling of leukocytes over vascular surfaces through high affinity divalent cation-dependent interactions with E-, P- and L-selectins. The polypeptide is Podocalyxin-like protein 2 (Podxl2) (Mus musculus (Mouse)).